The chain runs to 230 residues: Probable caffeoyl-CoA O-methyltransferase 1 (230 aa).

S-adenosyl-L-methionine-binding positions include Thr-52, Asp-74, 76-77 (GV), Ser-82, Asp-100, Ala-129, Asp-151, Asp-153, and Tyr-160. Asp-151 contacts a divalent metal cation. Residues Asp-177 and Asn-178 each contribute to the a divalent metal cation site.

It belongs to the class I-like SAM-binding methyltransferase superfamily. Cation-dependent O-methyltransferase family. CCoAMT subfamily.

The catalysed reaction is (E)-caffeoyl-CoA + S-adenosyl-L-methionine = (E)-feruloyl-CoA + S-adenosyl-L-homocysteine + H(+). The chain is Probable caffeoyl-CoA O-methyltransferase 1 (omt5) from Dictyostelium discoideum (Social amoeba).